Here is a 305-residue protein sequence, read N- to C-terminus: Nucleotide-binding protein Saro_2904 (305 aa).

Position 15–22 (G15–T22) interacts with ATP. D68–T71 lines the GTP pocket.

It belongs to the RapZ-like family.

Functionally, displays ATPase and GTPase activities. The sequence is that of Nucleotide-binding protein Saro_2904 from Novosphingobium aromaticivorans (strain ATCC 700278 / DSM 12444 / CCUG 56034 / CIP 105152 / NBRC 16084 / F199).